The sequence spans 523 residues: ATP synthase subunit alpha (523 aa).

ATP is bound at residue 173 to 180; that stretch reads GDRQTGKT.

This sequence belongs to the ATPase alpha/beta chains family. As to quaternary structure, F-type ATPases have 2 components, CF(1) - the catalytic core - and CF(0) - the membrane proton channel. CF(1) has five subunits: alpha(3), beta(3), gamma(1), delta(1), epsilon(1). CF(0) has three main subunits: a(1), b(2) and c(9-12). The alpha and beta chains form an alternating ring which encloses part of the gamma chain. CF(1) is attached to CF(0) by a central stalk formed by the gamma and epsilon chains, while a peripheral stalk is formed by the delta and b chains.

The protein resides in the cell membrane. It carries out the reaction ATP + H2O + 4 H(+)(in) = ADP + phosphate + 5 H(+)(out). In terms of biological role, produces ATP from ADP in the presence of a proton gradient across the membrane. The alpha chain is a regulatory subunit. In Streptomyces griseus subsp. griseus (strain JCM 4626 / CBS 651.72 / NBRC 13350 / KCC S-0626 / ISP 5235), this protein is ATP synthase subunit alpha.